The chain runs to 949 residues: Zinc finger CCHC domain-containing protein 14 (949 aa).

Disordered regions lie at residues 25-44 (SSLN…PGGA), 59-92 (EAPV…LGKH), 200-221 (STSS…LSKV), 236-262 (AGIP…LPHC), 355-457 (KEKS…DKEK), and 739-779 (PESS…PQPA). A compositionally biased stretch (gly residues) spans 28 to 43 (NGGGGHGGKGAPGPGG). Over residues 61-78 (PVSSVSNSLENALHTSAH) the composition is skewed to polar residues. Low complexity predominate over residues 200–219 (STSSPPQQLQSPSPGNPSLS). Basic and acidic residues predominate over residues 395–411 (HAAELRVEVEQPHHQLP). Residues 416 to 425 (SSEYSSSSSS) show a composition bias toward low complexity. A compositionally biased stretch (basic and acidic residues) spans 431–457 (AREESSDSAEENDRRVEIHLESSDKEK). The CCHC-type zinc-finger motif lies at 906–923 (LSCYNCGATGHRAQDCKQ).

This chain is Zinc finger CCHC domain-containing protein 14 (ZCCHC14), found in Homo sapiens (Human).